The following is a 403-amino-acid chain: MVRTSIKSIGSGIDRLSALPEHLLCRILSELSTKDSVRTSVLSKHWRNLWLHVPVLELETSDFPDNLVFREFIDRFVGFDKEIDLKSFDIFYDVNVLWYDDFLWMIDDVVKRRVCDLMVTNNPYVVNEKLVKMPISLYSCATLVNLNLSFVAMNNLPSESVCLPRVKTLYLHGVKLDGDSILGTLVSSCSVLEDLTVVTHPGDYEKVVCFRSQSVKSFTIESQCEYKDPNVEIDCPRLEYMCIREYQSESFVVHSIGPYAKVDVDIFFEVEYEDPLAISMIRNFLTGISKVREMTISSRTLEVIRGYHSMVKALPQFSNLSSLDALLVESYWELLPVFLGCCINLNSLVVELDGLSEIEEFKVSPLLQDSLSARGFVQQKTPVSVTKTSSERKIAAYFVKKSG.

An F-box domain is found at 13–59; the sequence is IDRLSALPEHLLCRILSELSTKDSVRTSVLSKHWRNLWLHVPVLELE.

This Arabidopsis thaliana (Mouse-ear cress) protein is F-box protein At1g60400.